The chain runs to 360 residues: Peptide chain release factor 1 (360 aa).

Q235 is subject to N5-methylglutamine. The span at 285–295 (AQQASEASTRK) shows a compositional bias: polar residues. The disordered stretch occupies residues 285–305 (AQQASEASTRKSLIGSGDRSD).

It belongs to the prokaryotic/mitochondrial release factor family. Methylated by PrmC. Methylation increases the termination efficiency of RF1.

It localises to the cytoplasm. Peptide chain release factor 1 directs the termination of translation in response to the peptide chain termination codons UAG and UAA. The chain is Peptide chain release factor 1 from Thiobacillus denitrificans (strain ATCC 25259 / T1).